A 156-amino-acid chain; its full sequence is Arginine repressor (156 aa).

The protein belongs to the ArgR family.

The protein resides in the cytoplasm. Its pathway is amino-acid biosynthesis; L-arginine biosynthesis [regulation]. Its function is as follows. Regulates arginine biosynthesis genes. The sequence is that of Arginine repressor from Proteus mirabilis (strain HI4320).